Reading from the N-terminus, the 502-residue chain is ATP synthase subunit alpha (502 aa).

The disordered stretch occupies residues 115 to 136 (VDGLGPIHTTKTRPIESPAPGV). 169 to 176 (GDRQTGKT) is an ATP binding site.

This sequence belongs to the ATPase alpha/beta chains family. As to quaternary structure, F-type ATPases have 2 components, CF(1) - the catalytic core - and CF(0) - the membrane proton channel. CF(1) has five subunits: alpha(3), beta(3), gamma(1), delta(1), epsilon(1). CF(0) has three main subunits: a(1), b(2) and c(9-12). The alpha and beta chains form an alternating ring which encloses part of the gamma chain. CF(1) is attached to CF(0) by a central stalk formed by the gamma and epsilon chains, while a peripheral stalk is formed by the delta and b chains.

The protein localises to the cell membrane. The catalysed reaction is ATP + H2O + 4 H(+)(in) = ADP + phosphate + 5 H(+)(out). Functionally, produces ATP from ADP in the presence of a proton gradient across the membrane. The alpha chain is a regulatory subunit. In Bacillus cytotoxicus (strain DSM 22905 / CIP 110041 / 391-98 / NVH 391-98), this protein is ATP synthase subunit alpha.